The chain runs to 215 residues: Histone-like protein 18C (215 aa).

Residues 140-215 (CTPRKENKCS…PKSSKPKCSM (76 aa)) are disordered. Basic residues-rich tracts occupy residues 149 to 190 (SKPR…RPRK) and 197 to 215 (AKAK…KCSM).

Its function is as follows. Not known. Encoded in the intron of cAMP-dependent protein kinase regulatory chain type I. The chain is Histone-like protein 18C (Mst77F) from Drosophila melanogaster (Fruit fly).